The following is a 567-amino-acid chain: TGF-beta receptor type-2 (567 aa).

The N-terminal stretch at 1-22 is a signal peptide; sequence MGRGLLRGLWPLHIVLWTRIAS. The Extracellular segment spans residues 23–166; it reads TIPPHVQKSV…NPDLLLVIFQ (144 aa). 6 cysteine pairs are disulfide-bonded: C51–C84, C54–C71, C61–C67, C77–C101, C121–C136, and C138–C143. N-linked (GlcNAc...) asparagine glycosylation is found at N70 and N94. Residue N154 is glycosylated (N-linked (GlcNAc...) asparagine). The helical transmembrane segment at 167 to 187 threads the bilayer; that stretch reads VTGISLLPPLGVAISVIIIFY. The Cytoplasmic portion of the chain corresponds to 188 to 567; that stretch reads CYRVNRQQKL…PEDGSLNTTK (380 aa). Positions 244-544 constitute a Protein kinase domain; the sequence is IELDTLVGKG…AERFSELEHL (301 aa). ATP is bound by residues 250–258 and K277; that span reads VGKGRFAEV. D379 (proton acceptor) is an active-site residue. Phosphoserine is present on residues S409, S548, and S553. The tract at residues 439–567 is sufficient for interaction with CLU; that stretch reads VESFKQTDVY…PEDGSLNTTK (129 aa).

Belongs to the protein kinase superfamily. TKL Ser/Thr protein kinase family. TGFB receptor subfamily. Homodimer. Heterohexamer; TGFB1, TGFB2 and TGFB3 homodimeric ligands assemble a functional receptor composed of two TGFBR1 and TGFBR2 heterodimers to form a ligand-receptor heterohexamer. The respective affinity of TGFRB1 and TGFRB2 for the ligands may modulate the kinetics of assembly of the receptor and may explain the different biological activities of TGFB1, TGFB2 and TGFB3. Component of a complex composed of TSC22D1 (via N-terminus), TGFBR1 and TGFBR2; the interaction between TSC22D1 and TGFBR1 is inhibited by SMAD7 and promoted by TGFB1. Interacts with DAXX. Interacts with DYNLT4. Interacts with ZFYVE9; ZFYVE9 recruits SMAD2 and SMAD3 to the TGF-beta receptor. Interacts with and is activated by SCUBE3; this interaction does not affect TGFB1-binding to TGFBR2. Interacts with VPS39; this interaction is independent of the receptor kinase activity and of the presence of TGF-beta. Interacts with CLU. In terms of assembly, homodimer; disulfide-linked. The cofactor is Mg(2+). Mn(2+) serves as cofactor. In terms of processing, phosphorylated on a Ser/Thr residue in the cytoplasmic domain.

Its subcellular location is the cell membrane. It is found in the membrane raft. It localises to the secreted. It carries out the reaction L-threonyl-[receptor-protein] + ATP = O-phospho-L-threonyl-[receptor-protein] + ADP + H(+). The catalysed reaction is L-seryl-[receptor-protein] + ATP = O-phospho-L-seryl-[receptor-protein] + ADP + H(+). Its function is as follows. Transmembrane serine/threonine kinase forming with the TGF-beta type I serine/threonine kinase receptor, TGFBR1, the non-promiscuous receptor for the TGF-beta cytokines TGFB1, TGFB2 and TGFB3. Transduces the TGFB1, TGFB2 and TGFB3 signal from the cell surface to the cytoplasm and thus regulates a plethora of physiological and pathological processes including cell cycle arrest in epithelial and hematopoietic cells, control of mesenchymal cell proliferation and differentiation, wound healing, extracellular matrix production, immunosuppression and carcinogenesis. The formation of the receptor complex composed of 2 TGFBR1 and 2 TGFBR2 molecules symmetrically bound to the cytokine dimer results in the phosphorylation and activation of TGFBR1 by the constitutively active TGFBR2. Activated TGFBR1 phosphorylates SMAD2 which dissociates from the receptor and interacts with SMAD4. The SMAD2-SMAD4 complex is subsequently translocated to the nucleus where it modulates the transcription of the TGF-beta-regulated genes. This constitutes the canonical SMAD-dependent TGF-beta signaling cascade. Also involved in non-canonical, SMAD-independent TGF-beta signaling pathways. In terms of biological role, has transforming growth factor beta-activated receptor activity. Functionally, binds TGFB1, TGFB2 and TGFB3 in the picomolar affinity range without the participation of additional receptors. Blocks activation of SMAD2 and SMAD3 by TGFB1. This Homo sapiens (Human) protein is TGF-beta receptor type-2 (TGFBR2).